The chain runs to 260 residues: 3'-5' ssDNA/RNA exonuclease TatD (260 aa).

Positions 91, 127, and 152 each coordinate a divalent metal cation.

The protein belongs to the metallo-dependent hydrolases superfamily. TatD-type hydrolase family. TatD subfamily. In terms of assembly, monomer. Requires Mg(2+) as cofactor. Mn(2+) serves as cofactor.

It localises to the cytoplasm. In terms of biological role, 3'-5' exonuclease that prefers single-stranded DNA and RNA. May play a role in the H(2)O(2)-induced DNA damage repair. This chain is 3'-5' ssDNA/RNA exonuclease TatD, found in Escherichia coli (strain K12).